Consider the following 315-residue polypeptide: Glucokinase-like protein CC_3167 (315 aa).

This sequence belongs to the bacterial glucokinase family.

This Caulobacter vibrioides (strain ATCC 19089 / CIP 103742 / CB 15) (Caulobacter crescentus) protein is Glucokinase-like protein CC_3167.